The sequence spans 23 residues: Septenin 2 (23 aa).

In terms of tissue distribution, expressed in skin glands.

Its subcellular location is the secreted. In terms of biological role, may act as an antimicrobial peptide. The polypeptide is Septenin 2 (Osteopilus septentrionalis (Cuban treefrog)).